The following is a 191-amino-acid chain: UPF0301 protein Bphy_2327 (191 aa).

Belongs to the UPF0301 (AlgH) family.

This Paraburkholderia phymatum (strain DSM 17167 / CIP 108236 / LMG 21445 / STM815) (Burkholderia phymatum) protein is UPF0301 protein Bphy_2327.